Consider the following 650-residue polypeptide: Growth hormone receptor (650 aa).

The signal sequence occupies residues 1–24 (MDLCQVFLTLALAVTSSTFSGSEA). The Extracellular segment spans residues 25 to 273 (TPATLGKASP…ILEACEEDIQ (249 aa)). 2 disulfide bridges follow: C56–C66 and C109–C120. Residue N123 is glycosylated (N-linked (GlcNAc...) asparagine). A disulfide bridge links C134 with C148. The Fibronectin type-III domain maps to 159–262 (PPIGLNWTLL…EVLRVIFPQT (104 aa)). N-linked (GlcNAc...) asparagine glycans are attached at residues N164, N169, and N208. Positions 248–252 (YSEFS) match the WSXWS motif motif. Residues 274-297 (FPWFLIIIFGIFGVAVMLFVVIFS) form a helical membrane-spanning segment. Topologically, residues 298-650 (KQQRIKMLIL…STDQLNKIMQ (353 aa)) are cytoplasmic. A required for JAK2 binding region spans residues 303–390 (KMLILPPVPV…HEKSAGILGA (88 aa)). Positions 306 to 314 (ILPPVPVPK) match the Box 1 motif motif. Residues 349–358 (DSWVEFIELD) carry the UbE motif motif. Position 350 is a phosphoserine (S350). Residues 466 to 486 (KPQPLLSSETEATHQLASTPM) are disordered. Polar residues predominate over residues 470–486 (LLSSETEATHQLASTPM). Phosphotyrosine occurs at positions 498 and 606.

Belongs to the type I cytokine receptor family. Type 1 subfamily. As to quaternary structure, on growth hormone (GH) binding, forms homodimers and binds JAK2 via a box 1-containing domain. Post-translationally, the soluble form (GHBP) is produced by phorbol ester-promoted proteolytic cleavage at the cell surface (shedding) by ADAM17/TACE. Shedding is inhibited by growth hormone (GH) binding to the receptor probably due to a conformational change in GHR rendering the receptor inaccessible to ADAM17. On GH binding, phosphorylated on tyrosine residues in the cytoplasmic domain by JAK2. In terms of processing, ubiquitinated by the ECS(SOCS2) complex following ligand-binding and phosphorylation by JAK2, leading to its degradation by the proteasome. Regulation by the ECS(SOCS2) complex acts as a negative feedback loop of growth hormone receptor signaling. Ubiquitination is not sufficient for GHR internalization. In terms of tissue distribution, expressed in all tissues tested including, liver, heart, adipose tissue, mammary gland, testes, ovary, brain, kidney and muscle. Highest levels in liver.

Its subcellular location is the cell membrane. It is found in the secreted. In terms of biological role, receptor for pituitary gland growth hormone (GH1) involved in regulating postnatal body growth. On ligand binding, couples to the JAK2/STAT5 pathway. The soluble form (GHBP) acts as a reservoir of growth hormone in plasma and may be a modulator/inhibitor of GH signaling. In Mus musculus (Mouse), this protein is Growth hormone receptor (Ghr).